The sequence spans 284 residues: Tropomyosin (284 aa).

Positions 1–273 (MEAIKKKMQA…KEKYKSISDE (273 aa)) form a coiled coil.

It belongs to the tropomyosin family. In terms of assembly, homodimer. As to expression, ubiquitous, but especially prevalent in the anterior muscle bundles associated with legs. Expression in the mid and posterior regions is probably related to the numerous, small muscle bundles associated with the digestive and reproductive systems (at protein level).

Its function is as follows. Tropomyosin, in association with the troponin complex, plays a central role in the calcium dependent regulation of muscle contraction. This chain is Tropomyosin, found in Psoroptes ovis (Sheep scab mite).